Reading from the N-terminus, the 248-residue chain is Pyridoxine 5'-phosphate synthase (248 aa).

N12 contributes to the 3-amino-2-oxopropyl phosphate binding site. Position 14–15 (D14–H15) interacts with 1-deoxy-D-xylulose 5-phosphate. R23 lines the 3-amino-2-oxopropyl phosphate pocket. H48 serves as the catalytic Proton acceptor. 1-deoxy-D-xylulose 5-phosphate is bound by residues R50 and H55. Catalysis depends on E75, which acts as the Proton acceptor. Position 105 (T105) interacts with 1-deoxy-D-xylulose 5-phosphate. H196 functions as the Proton donor in the catalytic mechanism. Residues G197 and G218 to H219 each bind 3-amino-2-oxopropyl phosphate.

The protein belongs to the PNP synthase family. In terms of assembly, homooctamer; tetramer of dimers.

Its subcellular location is the cytoplasm. The catalysed reaction is 3-amino-2-oxopropyl phosphate + 1-deoxy-D-xylulose 5-phosphate = pyridoxine 5'-phosphate + phosphate + 2 H2O + H(+). It participates in cofactor biosynthesis; pyridoxine 5'-phosphate biosynthesis; pyridoxine 5'-phosphate from D-erythrose 4-phosphate: step 5/5. Its function is as follows. Catalyzes the complicated ring closure reaction between the two acyclic compounds 1-deoxy-D-xylulose-5-phosphate (DXP) and 3-amino-2-oxopropyl phosphate (1-amino-acetone-3-phosphate or AAP) to form pyridoxine 5'-phosphate (PNP) and inorganic phosphate. The chain is Pyridoxine 5'-phosphate synthase from Stutzerimonas stutzeri (strain A1501) (Pseudomonas stutzeri).